The following is a 383-amino-acid chain: uncharacterized protein (383 aa).

Belongs to the peptidase M20 family.

This is an uncharacterized protein from Staphylococcus haemolyticus (strain JCSC1435).